The chain runs to 299 residues: GTPase Era (299 aa).

In terms of domain architecture, Era-type G spans 5-172; the sequence is KSGFVSIIGR…IDVLKSFLPE (168 aa). Residues 13-20 form a G1 region; it reads GRPNVGKS. 13–20 contacts GTP; sequence GRPNVGKS. Residues 39–43 are G2; the sequence is QTTRN. Positions 60 to 63 are G3; it reads DTPG. GTP-binding positions include 60–64 and 122–125; these read DTPGI and NKID. A G4 region spans residues 122-125; that stretch reads NKID. Positions 151–153 are G5; it reads ISA. The 78-residue stretch at 203–280 folds into the KH type-2 domain; sequence TSEEIPHAIG…YLELWVKVQR (78 aa).

It belongs to the TRAFAC class TrmE-Era-EngA-EngB-Septin-like GTPase superfamily. Era GTPase family. Monomer.

Its subcellular location is the cytoplasm. The protein localises to the cell membrane. An essential GTPase that binds both GDP and GTP, with rapid nucleotide exchange. Plays a role in 16S rRNA processing and 30S ribosomal subunit biogenesis and possibly also in cell cycle regulation and energy metabolism. In Staphylococcus epidermidis (strain ATCC 12228 / FDA PCI 1200), this protein is GTPase Era.